Here is a 388-residue protein sequence, read N- to C-terminus: Oligogalacturonide lyase (388 aa).

It is found in the periplasm. The enzyme catalyses 4-(4-deoxy-alpha-D-galact-4-enuronosyl)-D-galacturonate = 2 5-dehydro-4-deoxy-D-glucuronate. It participates in glycan metabolism; pectin degradation; 2-dehydro-3-deoxy-D-gluconate from pectin: step 3/5. Its function is as follows. Involved in degradation of pectin, which causes soft-rod disease in plants. The polypeptide is Oligogalacturonide lyase (ogl) (Pectobacterium atrosepticum (strain SCRI 1043 / ATCC BAA-672) (Erwinia carotovora subsp. atroseptica)).